A 225-amino-acid polypeptide reads, in one-letter code: Germin-like protein 3-8 (225 aa).

Residues 1 to 25 (MSRTSSAPLLVLSAALAVLASTCIA) form the signal peptide. A disulfide bridge connects residues Cys-34 and Cys-57. The region spanning 71–219 (AGLAVASDTD…SFQVDAKIIK (149 aa)) is the Cupin type-1 domain. N-linked (GlcNAc...) asparagine glycosylation is present at Asn-86. Residues His-119, His-121, Glu-126, and His-165 each contribute to the Mn(2+) site.

This sequence belongs to the germin family. In terms of assembly, oligomer (believed to be a pentamer but probably hexamer).

It is found in the secreted. The protein localises to the extracellular space. The protein resides in the apoplast. Its function is as follows. May play a role in plant defense. Probably has no oxalate oxidase activity even if the active site is conserved. This is Germin-like protein 3-8 from Oryza sativa subsp. japonica (Rice).